The primary structure comprises 1485 residues: Chromosome partition protein MukB (1485 aa).

34-41 contributes to the ATP binding site; sequence GGNGAGKS. Coiled coils occupy residues 337 to 480 and 509 to 605; these read LNLV…QAYQ and QHLA…PVWL. Positions 666 to 783 are flexible hinge; sequence PSGAEDARLI…EVPLFGRAAR (118 aa). Coiled coils occupy residues 835–915 and 977–1116; these read EAEI…IQQH and GMLT…AKAG.

It belongs to the SMC family. MukB subfamily. Homodimerization via its hinge domain. Binds to DNA via its C-terminal region. Interacts, and probably forms a ternary complex, with MukE and MukF via its C-terminal region. The complex formation is stimulated by calcium or magnesium. Interacts with tubulin-related protein FtsZ.

The protein resides in the cytoplasm. The protein localises to the nucleoid. Functionally, plays a central role in chromosome condensation, segregation and cell cycle progression. Functions as a homodimer, which is essential for chromosome partition. Involved in negative DNA supercoiling in vivo, and by this means organize and compact chromosomes. May achieve or facilitate chromosome segregation by condensation DNA from both sides of a centrally located replisome during cell division. This is Chromosome partition protein MukB from Yersinia pseudotuberculosis serotype O:3 (strain YPIII).